The sequence spans 302 residues: Small ribosomal subunit biogenesis GTPase RsgA (302 aa).

Residues 75–233 enclose the CP-type G domain; it reads KNELIRPAVS…IMDTPGFSSM (159 aa). Residues 124 to 127 and 175 to 183 contribute to the GTP site; these read NKKD and GPSGVGKSS. Zn(2+) contacts are provided by Cys-257, Cys-262, His-264, and Cys-270.

Belongs to the TRAFAC class YlqF/YawG GTPase family. RsgA subfamily. As to quaternary structure, monomer. Associates with 30S ribosomal subunit, binds 16S rRNA. It depends on Zn(2+) as a cofactor.

Its subcellular location is the cytoplasm. Functionally, one of several proteins that assist in the late maturation steps of the functional core of the 30S ribosomal subunit. Helps release RbfA from mature subunits. May play a role in the assembly of ribosomal proteins into the subunit. Circularly permuted GTPase that catalyzes slow GTP hydrolysis, GTPase activity is stimulated by the 30S ribosomal subunit. This is Small ribosomal subunit biogenesis GTPase RsgA from Agathobacter rectalis (strain ATCC 33656 / DSM 3377 / JCM 17463 / KCTC 5835 / VPI 0990) (Eubacterium rectale).